Reading from the N-terminus, the 161-residue chain is M-phase phosphoprotein 6 (161 aa).

Glycyl lysine isopeptide (Lys-Gly) (interchain with G-Cter in SUMO2) cross-links involve residues K37 and K86. A Phosphoserine modification is found at S111. The short motif at 117–134 (RRYETLVGTIGKKFVKKR) is the Nuclear localization signal element. Glycyl lysine isopeptide (Lys-Gly) (interchain with G-Cter in SUMO2) cross-links involve residues K128, K151, and K154.

This sequence belongs to the MPP6 family. In terms of assembly, associates with the RNA exosome complex, mediated by EXOSC3. Interacts with ARHGAP18. Interacts with exosome cofactors EXOSC10 and MTREX. Post-translationally, phosphorylated in M (mitotic) phase.

It is found in the nucleus. The protein resides in the nucleolus. Its subcellular location is the cytoplasm. Its function is as follows. RNA-binding protein that associates with the RNA exosome complex. Involved in the 3'-processing of the 7S pre-RNA to the mature 5.8S rRNA and plays a role in recruiting the RNA exosome complex to pre-rRNA; this function may include C1D. This is M-phase phosphoprotein 6 from Mus musculus (Mouse).